The following is a 202-amino-acid chain: Glycerol-3-phosphate acyltransferase (202 aa).

Helical transmembrane passes span 2 to 22 (INLL…AVVV), 51 to 71 (KAAI…VLLA), 80 to 100 (VDET…LFPL), 116 to 136 (ILFA…LIIA), 137 to 157 (FFFR…PFFY), and 158 to 178 (VLMN…VLLI).

It belongs to the PlsY family. Probably interacts with PlsX.

Its subcellular location is the cell inner membrane. The enzyme catalyses an acyl phosphate + sn-glycerol 3-phosphate = a 1-acyl-sn-glycero-3-phosphate + phosphate. The protein operates within lipid metabolism; phospholipid metabolism. Its function is as follows. Catalyzes the transfer of an acyl group from acyl-phosphate (acyl-PO(4)) to glycerol-3-phosphate (G3P) to form lysophosphatidic acid (LPA). This enzyme utilizes acyl-phosphate as fatty acyl donor, but not acyl-CoA or acyl-ACP. This Cupriavidus metallidurans (strain ATCC 43123 / DSM 2839 / NBRC 102507 / CH34) (Ralstonia metallidurans) protein is Glycerol-3-phosphate acyltransferase.